The sequence spans 227 residues: Cytochrome c oxidase subunit 2 (227 aa).

The Mitochondrial intermembrane segment spans residues 1–14 (MAYPFELGFQDATS). The chain crosses the membrane as a helical span at residues 15 to 45 (PIMEELLHFHDHTLMIVFLISSLVLYIISLM). Residues 46 to 59 (LTTKLTHTSTMDAQ) are Mitochondrial matrix-facing. The helical transmembrane segment at 60–87 (EVETIWTILPAIILILIALPSLRILYMM) threads the bilayer. The Mitochondrial intermembrane portion of the chain corresponds to 88–227 (DEINDPSLTV…HFENWSSSML (140 aa)). Cu cation contacts are provided by H161, C196, E198, C200, H204, and M207. E198 lines the Mg(2+) pocket.

The protein belongs to the cytochrome c oxidase subunit 2 family. Component of the cytochrome c oxidase (complex IV, CIV), a multisubunit enzyme composed of 14 subunits. The complex is composed of a catalytic core of 3 subunits MT-CO1, MT-CO2 and MT-CO3, encoded in the mitochondrial DNA, and 11 supernumerary subunits COX4I, COX5A, COX5B, COX6A, COX6B, COX6C, COX7A, COX7B, COX7C, COX8 and NDUFA4, which are encoded in the nuclear genome. The complex exists as a monomer or a dimer and forms supercomplexes (SCs) in the inner mitochondrial membrane with NADH-ubiquinone oxidoreductase (complex I, CI) and ubiquinol-cytochrome c oxidoreductase (cytochrome b-c1 complex, complex III, CIII), resulting in different assemblies (supercomplex SCI(1)III(2)IV(1) and megacomplex MCI(2)III(2)IV(2)). Found in a complex with TMEM177, COA6, COX18, COX20, SCO1 and SCO2. Interacts with TMEM177 in a COX20-dependent manner. Interacts with COX20. Interacts with COX16. Cu cation serves as cofactor.

Its subcellular location is the mitochondrion inner membrane. It carries out the reaction 4 Fe(II)-[cytochrome c] + O2 + 8 H(+)(in) = 4 Fe(III)-[cytochrome c] + 2 H2O + 4 H(+)(out). In terms of biological role, component of the cytochrome c oxidase, the last enzyme in the mitochondrial electron transport chain which drives oxidative phosphorylation. The respiratory chain contains 3 multisubunit complexes succinate dehydrogenase (complex II, CII), ubiquinol-cytochrome c oxidoreductase (cytochrome b-c1 complex, complex III, CIII) and cytochrome c oxidase (complex IV, CIV), that cooperate to transfer electrons derived from NADH and succinate to molecular oxygen, creating an electrochemical gradient over the inner membrane that drives transmembrane transport and the ATP synthase. Cytochrome c oxidase is the component of the respiratory chain that catalyzes the reduction of oxygen to water. Electrons originating from reduced cytochrome c in the intermembrane space (IMS) are transferred via the dinuclear copper A center (CU(A)) of subunit 2 and heme A of subunit 1 to the active site in subunit 1, a binuclear center (BNC) formed by heme A3 and copper B (CU(B)). The BNC reduces molecular oxygen to 2 water molecules using 4 electrons from cytochrome c in the IMS and 4 protons from the mitochondrial matrix. In Tamias amoenus (Yellow-pine chipmunk), this protein is Cytochrome c oxidase subunit 2 (MT-CO2).